The chain runs to 533 residues: MKLGSRHNQHSFAQIPSVHTTRSKFNRSFGTKDTFKFDDLTPIFIDEILPGDTINMNTKTFIRLATQVVPVMDRMMLDFYFFFVPCRLVWDNWEKFNGAQDNPSDSTDYLIPTITAPAGGFENMSIYDHFGIPTQVANLEINALPFRAYNLIYNDWFRDQNLIGKIAVPKGDGPDNHADYQLLKAAKPHDYFTSALPWPQKGMAVEMPIGNSAPITYVPNAGNGPYPHFNWVQTPGGPGNNGALSQVTFGGQKAISAAGNDPIGYDPQGTLIADLSSATAATINQLRQAMMMQSLLELDARGGTRYVEILKSHFNVISLDFRLQRPEYLSGGTIDLQQNPVPQTSSSTTDSPQGNLAAFSTASEFGNKIGFSKSFVEHGYVLGFIRARGQVTYQQGLHKMWSRQTRWDFFWPKFQELGEQAILNKEIYAQGNATDSEIFGYQERYGEYRFRPSEIKGQFRSNFAESLDVWHLAEYFTVKPSLNKTFIESNTPIERSLVVTRPDYPDLIGDFWFDYTHVRPMVTYGVPATFGRF.

The segment at Thr333 to Gln353 is disordered.

This sequence belongs to the microviridae F protein family.

Its subcellular location is the virion. The protein localises to the host cytoplasm. Functionally, assembles to form an icosahedral capsid with a T=1 symmetry. This is Capsid protein VP1 from Bdellovibrio bacteriovorus (Bacteriophage phiMH2K).